The sequence spans 1577 residues: Probable serine/threonine-protein kinase gdt9 (1577 aa).

The N-terminal stretch at 1 to 16 (MKTFLLIFLLICVCKG) is a signal peptide. At 17–966 (ITNITTPSIY…NNEDNHKKLV (950 aa)) the chain is on the extracellular side. A helical membrane pass occupies residues 967 to 987 (IALSVSIPVAALLVILCFGIF). Residues 988–1577 (ICYNNNKKNK…SLVKIFKRFN (590 aa)) lie on the Cytoplasmic side of the membrane. Positions 998-1014 (NETKGKDIETNTDKKDD) are enriched in basic and acidic residues. 2 disordered regions span residues 998–1019 (NETK…NENE) and 1050–1128 (TLPP…FPTI). A compositionally biased stretch (polar residues) spans 1050 to 1082 (TLPPQSTISIDTSPSSENTTFTESLTPKKSATV). Low complexity predominate over residues 1091–1115 (NSTNESTVSNSSSENNSDNNNNNNN). The Protein kinase domain occupies 1290–1573 (LDFDEICGQG…EIVFSLVKIF (284 aa)). ATP-binding positions include 1296 to 1304 (CGQGTYGMV) and Lys-1317. The active-site Proton acceptor is the Asp-1436.

This sequence in the N-terminal section; belongs to the GDT family. It in the C-terminal section; belongs to the protein kinase superfamily. TKL Ser/Thr protein kinase family.

The protein resides in the membrane. The enzyme catalyses L-seryl-[protein] + ATP = O-phospho-L-seryl-[protein] + ADP + H(+). The catalysed reaction is L-threonyl-[protein] + ATP = O-phospho-L-threonyl-[protein] + ADP + H(+). The polypeptide is Probable serine/threonine-protein kinase gdt9 (gdt9) (Dictyostelium discoideum (Social amoeba)).